Here is a 151-residue protein sequence, read N- to C-terminus: Exosporium protein B (151 aa).

It localises to the spore wall. The sequence is that of Exosporium protein B from Clostridium sporogenes (strain ATCC 15579).